The following is a 336-amino-acid chain: UDP-3-O-acylglucosamine N-acyltransferase (336 aa).

His237 acts as the Proton acceptor in catalysis.

The protein belongs to the transferase hexapeptide repeat family. LpxD subfamily. Homotrimer.

It catalyses the reaction a UDP-3-O-[(3R)-3-hydroxyacyl]-alpha-D-glucosamine + a (3R)-hydroxyacyl-[ACP] = a UDP-2-N,3-O-bis[(3R)-3-hydroxyacyl]-alpha-D-glucosamine + holo-[ACP] + H(+). It participates in bacterial outer membrane biogenesis; LPS lipid A biosynthesis. Catalyzes the N-acylation of UDP-3-O-acylglucosamine using 3-hydroxyacyl-ACP as the acyl donor. Is involved in the biosynthesis of lipid A, a phosphorylated glycolipid that anchors the lipopolysaccharide to the outer membrane of the cell. This Alcanivorax borkumensis (strain ATCC 700651 / DSM 11573 / NCIMB 13689 / SK2) protein is UDP-3-O-acylglucosamine N-acyltransferase.